A 184-amino-acid chain; its full sequence is Shikimate kinase (184 aa).

15 to 20 (GAGKTS) is an ATP binding site. T19 lines the Mg(2+) pocket. 3 residues coordinate substrate: D37, R61, and G83. R123 is a binding site for ATP. R142 provides a ligand contact to substrate.

Belongs to the shikimate kinase family. In terms of assembly, monomer. It depends on Mg(2+) as a cofactor.

The protein localises to the cytoplasm. The enzyme catalyses shikimate + ATP = 3-phosphoshikimate + ADP + H(+). It participates in metabolic intermediate biosynthesis; chorismate biosynthesis; chorismate from D-erythrose 4-phosphate and phosphoenolpyruvate: step 5/7. Functionally, catalyzes the specific phosphorylation of the 3-hydroxyl group of shikimic acid using ATP as a cosubstrate. This Coxiella burnetii (strain CbuK_Q154) (Coxiella burnetii (strain Q154)) protein is Shikimate kinase.